The chain runs to 194 residues: Thioredoxin peroxidase (194 aa).

The region spanning 2 to 160 (LQPNMPAPNF…ALRLLDAFIF (159 aa)) is the Thioredoxin domain. Cys47 acts as the Cysteine sulfenic acid (-SOH) intermediate in catalysis.

It belongs to the peroxiredoxin family. AhpC/Prx1 subfamily. In terms of assembly, homodimer; disulfide-linked, upon oxidation.

It carries out the reaction a hydroperoxide + [thioredoxin]-dithiol = an alcohol + [thioredoxin]-disulfide + H2O. Its function is as follows. Antioxidant. Could be involved in protection against reactive oxygen species (ROS) generated by metabolic processes and/or protection of the parasite against ROS released by immune effector cells. Thiol-specific peroxidase that catalyzes the reduction of hydrogen peroxide and organic hydroperoxides to water and alcohols, respectively. Plays a role in cell protection against oxidative stress by detoxifying peroxides and as sensor of hydrogen peroxide-mediated signaling events. This is Thioredoxin peroxidase from Fasciola hepatica (Liver fluke).